A 201-amino-acid chain; its full sequence is Potassium-transporting ATPase KdpC subunit (201 aa).

A helical transmembrane segment spans residues 10–30 (VLLVALTAVTGLAYPLAVTGI).

It belongs to the KdpC family. As to quaternary structure, the system is composed of three essential subunits: KdpA, KdpB and KdpC.

It localises to the cell inner membrane. Its function is as follows. Part of the high-affinity ATP-driven potassium transport (or Kdp) system, which catalyzes the hydrolysis of ATP coupled with the electrogenic transport of potassium into the cytoplasm. This subunit acts as a catalytic chaperone that increases the ATP-binding affinity of the ATP-hydrolyzing subunit KdpB by the formation of a transient KdpB/KdpC/ATP ternary complex. This is Potassium-transporting ATPase KdpC subunit from Methylorubrum extorquens (strain PA1) (Methylobacterium extorquens).